The following is a 577-amino-acid chain: Nuclear receptor subfamily 4 group A member 1 (577 aa).

Residues 243–318 (EGRCAVCGDN…VGMVKEVVRT (76 aa)) constitute a DNA-binding region (nuclear receptor). 2 NR C4-type zinc fingers span residues 246 to 266 (CAVC…CEGC) and 282 to 311 (CLAN…VVGM). The interval 247-333 (AVCGDNASCQ…RRGRLPSKPK (87 aa)) is required for binding NBRE-containing DNA. The region spanning 339-574 (SPVDLINSLV…PIVDKIFMDT (236 aa)) is the NR LBD domain. The interval 500 to 523 (PKKVEELQSQIINCLKEHIPSSMN) is may bind lipopolysaccharide. Positions 563-574 (PPPIVDKIFMDT) are AF-2.

The protein belongs to the nuclear hormone receptor family. NR4 subfamily. Requires Zn(2+) as cofactor.

It localises to the nucleus. The protein resides in the cytoplasm. Its subcellular location is the cytosol. Its function is as follows. Orphan nuclear receptor. Binds the NGFI-B response element (NBRE) 5'-AAAAGGTCA-3'. In the cytosol, may detect bacterial lipopolysaccharide (LPS) and NBRE-containing mitochondrial DNA released during pyroptosis, and play a role in non-canonical inflammasome activation. The sequence is that of Nuclear receptor subfamily 4 group A member 1 (nr4a1) from Xenopus laevis (African clawed frog).